Here is a 232-residue protein sequence, read N- to C-terminus: Clarin-1 (232 aa).

Residues 8–28 form a helical membrane-spanning segment; that stretch reads IIFCMAGVFSFACALGVVTAL. The N-linked (GlcNAc...) asparagine glycan is linked to N48. Transmembrane regions (helical) follow at residues 101 to 121 and 135 to 155; these read IILF…FFMY and LGLY…MILF. An N-linked (GlcNAc...) asparagine glycan is attached at N184. The chain crosses the membrane as a helical span at residues 186-206; it reads TTSFWVVFICFFVHFLNGLLI.

The protein belongs to the clarin family.

It is found in the cell membrane. May have a role in the excitatory ribbon synapse junctions between hair cells and cochlear ganglion cells and presumably also in analogous synapses within the retina. The protein is Clarin-1 (Clrn1) of Rattus norvegicus (Rat).